Consider the following 295-residue polypeptide: Nicotinate-nucleotide pyrophosphorylase [carboxylating] (295 aa).

Substrate contacts are provided by residues arginine 107, 142–144 (TRK), arginine 166, lysine 176, glutamate 206, aspartate 227, and 256–258 (SGG).

It belongs to the NadC/ModD family. Hexamer formed by 3 homodimers.

It localises to the cytoplasm. The protein resides in the nucleus. The catalysed reaction is nicotinate beta-D-ribonucleotide + CO2 + diphosphate = quinolinate + 5-phospho-alpha-D-ribose 1-diphosphate + 2 H(+). Its pathway is cofactor biosynthesis; NAD(+) biosynthesis; nicotinate D-ribonucleotide from quinolinate: step 1/1. In terms of biological role, involved in the catabolism of quinolinic acid (QA). The polypeptide is Nicotinate-nucleotide pyrophosphorylase [carboxylating] (BNA6) (Saccharomyces cerevisiae (strain ATCC 204508 / S288c) (Baker's yeast)).